The primary structure comprises 203 residues: Thymidylate kinase (203 aa).

Gly-10–Ser-17 is a binding site for ATP.

It belongs to the thymidylate kinase family.

It catalyses the reaction dTMP + ATP = dTDP + ADP. Phosphorylation of dTMP to form dTDP in both de novo and salvage pathways of dTTP synthesis. In Cupriavidus necator (strain ATCC 17699 / DSM 428 / KCTC 22496 / NCIMB 10442 / H16 / Stanier 337) (Ralstonia eutropha), this protein is Thymidylate kinase.